Reading from the N-terminus, the 417-residue chain is Probable serine/threonine-protein kinase WNK9 (417 aa).

Residues M1 to V23 are disordered. One can recognise a Protein kinase domain in the interval I32–L289. ATP-binding positions include T113–F116 and K163. D180 serves as the catalytic Proton acceptor.

Belongs to the protein kinase superfamily. Ser/Thr protein kinase family. WNK subfamily.

The catalysed reaction is L-seryl-[protein] + ATP = O-phospho-L-seryl-[protein] + ADP + H(+). It catalyses the reaction L-threonyl-[protein] + ATP = O-phospho-L-threonyl-[protein] + ADP + H(+). This chain is Probable serine/threonine-protein kinase WNK9 (WNK9), found in Oryza sativa subsp. japonica (Rice).